The sequence spans 49 residues: Small, acid-soluble spore protein O (49 aa).

Residues 1–49 (MVKRKANHVIPGMNDASAQGKGAGYNEELSNEPLTEAQKQNNKKRKKNQ) form a disordered region.

The protein belongs to the SspO family.

It localises to the spore core. The sequence is that of Small, acid-soluble spore protein O from Anoxybacillus flavithermus (strain DSM 21510 / WK1).